A 243-amino-acid chain; its full sequence is Pyridoxine 5'-phosphate synthase (243 aa).

Asparagine 9 lines the 3-amino-2-oxopropyl phosphate pocket. Aspartate 11–histidine 12 lines the 1-deoxy-D-xylulose 5-phosphate pocket. Arginine 20 serves as a coordination point for 3-amino-2-oxopropyl phosphate. Residue histidine 45 is the Proton acceptor of the active site. 1-deoxy-D-xylulose 5-phosphate-binding residues include arginine 47 and histidine 52. Glutamate 72 functions as the Proton acceptor in the catalytic mechanism. Threonine 102 is a 1-deoxy-D-xylulose 5-phosphate binding site. The active-site Proton donor is histidine 193. Residues glycine 194 and glycine 215 to histidine 216 each bind 3-amino-2-oxopropyl phosphate.

Belongs to the PNP synthase family. In terms of assembly, homooctamer; tetramer of dimers.

It is found in the cytoplasm. It carries out the reaction 3-amino-2-oxopropyl phosphate + 1-deoxy-D-xylulose 5-phosphate = pyridoxine 5'-phosphate + phosphate + 2 H2O + H(+). The protein operates within cofactor biosynthesis; pyridoxine 5'-phosphate biosynthesis; pyridoxine 5'-phosphate from D-erythrose 4-phosphate: step 5/5. In terms of biological role, catalyzes the complicated ring closure reaction between the two acyclic compounds 1-deoxy-D-xylulose-5-phosphate (DXP) and 3-amino-2-oxopropyl phosphate (1-amino-acetone-3-phosphate or AAP) to form pyridoxine 5'-phosphate (PNP) and inorganic phosphate. This is Pyridoxine 5'-phosphate synthase from Photobacterium profundum (strain SS9).